A 102-amino-acid polypeptide reads, in one-letter code: UPF0213 protein XAC3202 (102 aa).

A GIY-YIG domain is found at 5 to 80 (KPWHLYLLLC…KRLPRARKLA (76 aa)).

Belongs to the UPF0213 family.

The protein is UPF0213 protein XAC3202 of Xanthomonas axonopodis pv. citri (strain 306).